The primary structure comprises 245 residues: 3-deoxy-manno-octulosonate cytidylyltransferase (245 aa).

It belongs to the KdsB family.

The protein resides in the cytoplasm. It carries out the reaction 3-deoxy-alpha-D-manno-oct-2-ulosonate + CTP = CMP-3-deoxy-beta-D-manno-octulosonate + diphosphate. It functions in the pathway nucleotide-sugar biosynthesis; CMP-3-deoxy-D-manno-octulosonate biosynthesis; CMP-3-deoxy-D-manno-octulosonate from 3-deoxy-D-manno-octulosonate and CTP: step 1/1. The protein operates within bacterial outer membrane biogenesis; lipopolysaccharide biosynthesis. In terms of biological role, activates KDO (a required 8-carbon sugar) for incorporation into bacterial lipopolysaccharide in Gram-negative bacteria. The chain is 3-deoxy-manno-octulosonate cytidylyltransferase from Rhodopseudomonas palustris (strain HaA2).